Here is a 213-residue protein sequence, read N- to C-terminus: Kynurenine formamidase (213 aa).

Trp18 is a substrate binding site. Residues His48, His52, and Asp54 each contribute to the Zn(2+) site. His58 acts as the Proton donor/acceptor in catalysis. Residues His160 and Glu172 each contribute to the Zn(2+) site.

The protein belongs to the Cyclase 1 superfamily. KynB family. As to quaternary structure, homodimer. It depends on Zn(2+) as a cofactor.

The catalysed reaction is N-formyl-L-kynurenine + H2O = L-kynurenine + formate + H(+). The protein operates within amino-acid degradation; L-tryptophan degradation via kynurenine pathway; L-kynurenine from L-tryptophan: step 2/2. Functionally, catalyzes the hydrolysis of N-formyl-L-kynurenine to L-kynurenine, the second step in the kynurenine pathway of tryptophan degradation. This is Kynurenine formamidase from Burkholderia pseudomallei (strain 1710b).